Reading from the N-terminus, the 163-residue chain is Phosphopantetheine adenylyltransferase (163 aa).

Residue serine 9 participates in substrate binding. Residues 9–10 (SF) and histidine 17 each bind ATP. Substrate contacts are provided by lysine 41, threonine 73, and arginine 87. ATP contacts are provided by residues 88 to 90 (GLR), glutamate 98, and 123 to 129 (YSFISSG).

It belongs to the bacterial CoaD family. Homohexamer. Requires Mg(2+) as cofactor.

The protein localises to the cytoplasm. It catalyses the reaction (R)-4'-phosphopantetheine + ATP + H(+) = 3'-dephospho-CoA + diphosphate. Its pathway is cofactor biosynthesis; coenzyme A biosynthesis; CoA from (R)-pantothenate: step 4/5. In terms of biological role, reversibly transfers an adenylyl group from ATP to 4'-phosphopantetheine, yielding dephospho-CoA (dPCoA) and pyrophosphate. This Desulforudis audaxviator (strain MP104C) protein is Phosphopantetheine adenylyltransferase.